We begin with the raw amino-acid sequence, 331 residues long: MSRQLSRARPATVLGAMEMGRRMDAPTSAAVTRAFLERGHTEIDTAFVYSEGQSETILGGLGLRLGGSDCRVKIDTKAIPLFGNSLKPDSLRFQLETSLKRLQCPRVDLFYLHMPDHSTPVEETLRACHQLHQEGKFVELGLSNYAAWEVAEICTLCKSNGWILPTVYQGMYNAITRQVETELFPCLRHFGLRFYAFNPLAGGLLTGKYKYEDKNGKQPVGRFFGNTWAEMYRNRYWKEHHFEGIALVEKALQAAYGASAPSMTSATLRWMYHHSQLQGAHGDAVILGMSSLEQLEQNLAAAEEGPLEPAVVDAFNQAWHLVTHECPNYFR.

Residue Ser-6 is modified to Phosphoserine. Positions 17, 44, and 49 each coordinate NADPH. Residue Tyr-49 is the Proton donor of the active site. Ser-85 carries the phosphoserine modification. Residues His-113, Ser-143, Asn-144, Asn-198, Leu-200, Gly-202, Lys-208, Tyr-209, and Arg-222 each coordinate NADPH. A Phosphothreonine modification is found at Thr-227. NADPH-binding residues include Ser-290, Gln-294, and Asn-298.

Belongs to the aldo/keto reductase family. Aldo/keto reductase 2 subfamily. As to quaternary structure, homodimer. Expressed in colon, kidney, liver, pancreas, adenocarcinoma and endometrium.

The protein localises to the cytoplasm. It carries out the reaction a primary alcohol + NADP(+) = an aldehyde + NADPH + H(+). It catalyses the reaction aflatoxin B1 dialdehyde + NADPH + H(+) = aflatoxin B1 C(6a)-monoaldehyde + NADP(+). The catalysed reaction is aflatoxin B1 dialdehyde + NADPH + H(+) = aflatoxin B1 C(8)-monoaldehyde + NADP(+). The enzyme catalyses aflatoxin B1 C(6a)-monoaldehyde + NADPH + 2 H(+) = aflatoxin B1 triol + NADP(+). Inhibited by citrate. In terms of biological role, catalyzes the NADPH-dependent reduction of various carbonyl-containing compounds, including aldehydes, ketones, and toxic products from cellular metabolism or environmental exposure. Can reduce the dialdehyde form of aflatoxin B1 (AFB1) into alcohol derivatives, via monoaldehydes intermediates. Can reduce the dialdehyde form of aflatoxin B1 (AFB1) into alcohol derivatives, via monoaldehydes intermediates, thus preventing the formation of protein adducts that contribute to AFB1-induced toxicity. This is Aldo-keto reductase family 7 member A3 from Homo sapiens (Human).